The primary structure comprises 237 residues: Flagellar L-ring protein (237 aa).

The signal sequence occupies residues 1-24 (MNRLSVPRFSVLIASLCGITLLSG). The N-palmitoyl cysteine moiety is linked to residue Cys-25. A lipid anchor (S-diacylglycerol cysteine) is attached at Cys-25.

This sequence belongs to the FlgH family. In terms of assembly, the basal body constitutes a major portion of the flagellar organelle and consists of four rings (L,P,S, and M) mounted on a central rod.

The protein localises to the cell outer membrane. It is found in the bacterial flagellum basal body. Its function is as follows. Assembles around the rod to form the L-ring and probably protects the motor/basal body from shearing forces during rotation. The protein is Flagellar L-ring protein of Pseudomonas syringae pv. syringae (strain B728a).